Consider the following 238-residue polypeptide: UPF0280 protein Msm_0088 (238 aa).

The protein belongs to the UPF0280 family.

The chain is UPF0280 protein Msm_0088 from Methanobrevibacter smithii (strain ATCC 35061 / DSM 861 / OCM 144 / PS).